The following is a 357-amino-acid chain: Norreticuline-7-O-methyltransferase (357 aa).

Residue Asp-225 participates in S-adenosyl-L-methionine binding. The active-site Proton acceptor is the His-263.

This sequence belongs to the class I-like SAM-binding methyltransferase superfamily. Cation-independent O-methyltransferase family. As to expression, expressed instems, leaves, roots and seedlings.

In terms of biological role, involved in the biosynthesis of benzylisoquinoline alkaloids. Catalyzes specifically the methylation of norreticuline at position seven to produce norlaudanine. No activity with norcoclaurine, reticuline, norlaudanosoline, norisoorientaline, scoulerine, salutaridinol, oripavine, salsolinol, codeine or morphine. Involved in papaverine biosynthesis. This chain is Norreticuline-7-O-methyltransferase, found in Papaver somniferum (Opium poppy).